The primary structure comprises 3097 residues: Neural-cadherin (3097 aa).

The first 36 residues, 1–36 (MAARRCLNQLRQRYITNRFNICTCAIFLISLPFILA), serve as a signal peptide directing secretion. Residues N97 and N150 are each glycosylated (N-linked (GlcNAc...) asparagine). One can recognise a Cadherin 1 domain in the interval 181-305 (VRENQPAGTR…LDENDNRPIF (125 aa)). 2 N-linked (GlcNAc...) asparagine glycosylation sites follow: N325 and N426. Cadherin domains follow at residues 430–543 (HREK…PPYF), 554–651 (VQLN…APQF), 660–756 (IPEN…APKF), 766–858 (VDED…EPKF), 867–968 (VDEN…KPVF), 978–1078 (VEEG…PPLF), 1087–1183 (VKQD…PPVW), 1193–1299 (VKEN…IPLF), 1307–1414 (VLEG…PPYF), 1423–1514 (VDEN…PPVF), 1523–1630 (ITEE…APIF), 1639–1742 (VTEN…PPQF), 1749–1861 (TEVD…KPHF), 1870–1966 (VFED…APKF), and 1974–2085 (LPEH…QPGS). The N-linked (GlcNAc...) asparagine glycan is linked to N930. N1266 carries N-linked (GlcNAc...) asparagine glycosylation. 11 cysteine pairs are disulfide-bonded: C2346–C2357, C2351–C2366, C2368–C2377, C2559–C2585, C2592–C2607, C2601–C2616, C2618–C2627, C2787–C2822, C2869–C2880, C2874–C2891, and C2893–C2902. The region spanning 2346-2377 (CRTTPCHNGGRCVDTRFGPHCSCPVGYTGPRC) is the EGF-like 1 domain. The region spanning 2379–2585 (QTTRSFRGNG…GLSRNSVAGC (207 aa)) is the Laminin G-like 1 domain. Residues 2592–2627 (CAQTETTARCWEHGNCVGSLSEARCHCRPGWTGPAC) enclose the EGF-like 2 domain. The Laminin G-like 2 domain occupies 2631–2822 (TIPTTFKAQS…TMARNLEKGC (192 aa)). Residues 2869 to 2902 (CLDMPCMNGATCINLEPRLRYRCICPDGFWGENC) form the EGF-like 3 domain. Residues 2917–2937 (ALAAILVCLLIILILVLVFVV) traverse the membrane as a helical segment. The Cytoplasmic portion of the chain corresponds to 2938–3097 (YNRRREAHIK…PNPHNTELEL (160 aa)).

As to expression, in the embryo, the protein first appears in the mesoderm at stage 9 and is present in the myoblasts and muscle fibers by stage 12 and stage 14, respectively. At stage 12 the protein is also located in the axons of the entire CNS, but not in the glial cells. In third instar larvae protein is expressed in the CNS neuropile, photoreceptor axons and precursors of adult muscles.

The protein localises to the cell membrane. Cadherins are calcium-dependent cell adhesion proteins. They preferentially interact with themselves in a homophilic manner in connecting cells; cadherins may thus contribute to the sorting of heterogeneous cell types. May associate with arm neural isoform and participate in the transmission of developmental information. The polypeptide is Neural-cadherin (CadN) (Drosophila melanogaster (Fruit fly)).